The primary structure comprises 378 residues: Succinate--CoA ligase [GDP-forming] subunit beta (378 aa).

The region spanning 9-235 is the ATP-grasp domain; it reads KEILARYGVP…VEAEHPLEVE (227 aa). GTP contacts are provided by residues Lys-45, 52–54, Val-94, and Glu-99; that span reads GRG. Positions 190 and 204 each coordinate Mg(2+). Residues Asn-255 and 312–314 contribute to the substrate site; that span reads GIT.

This sequence belongs to the succinate/malate CoA ligase beta subunit family. As to quaternary structure, heterotetramer of two alpha and two beta subunits. Mg(2+) serves as cofactor.

The catalysed reaction is GTP + succinate + CoA = succinyl-CoA + GDP + phosphate. It carries out the reaction succinate + ATP + CoA = succinyl-CoA + ADP + phosphate. It functions in the pathway carbohydrate metabolism; tricarboxylic acid cycle; succinate from succinyl-CoA (ligase route): step 1/1. Functionally, succinyl-CoA synthetase functions in the citric acid cycle (TCA), coupling the hydrolysis of succinyl-CoA to the synthesis of either ATP or GTP and thus represents the only step of substrate-level phosphorylation in the TCA. The beta subunit provides nucleotide specificity of the enzyme and binds the substrate succinate, while the binding sites for coenzyme A and phosphate are found in the alpha subunit. Can use either ATP or GTP, but prefers GTP. The polypeptide is Succinate--CoA ligase [GDP-forming] subunit beta (Thermus thermophilus).